The sequence spans 83 residues: Cell division topological specificity factor (83 aa).

It belongs to the MinE family.

Functionally, prevents the cell division inhibition by proteins MinC and MinD at internal division sites while permitting inhibition at polar sites. This ensures cell division at the proper site by restricting the formation of a division septum at the midpoint of the long axis of the cell. The sequence is that of Cell division topological specificity factor from Acidithiobacillus ferrooxidans (strain ATCC 23270 / DSM 14882 / CIP 104768 / NCIMB 8455) (Ferrobacillus ferrooxidans (strain ATCC 23270)).